Consider the following 182-residue polypeptide: 5-formyltetrahydrofolate cyclo-ligase (182 aa).

Residues 1–21 (MIRQRRRALTPEQQQEMGQQA) are disordered. The span at 11 to 21 (PEQQQEMGQQA) shows a compositional bias: polar residues. Residues 128-135 (GMGGGFYD) and Asp167 each bind ATP.

The protein belongs to the 5-formyltetrahydrofolate cyclo-ligase family.

The catalysed reaction is (6S)-5-formyl-5,6,7,8-tetrahydrofolate + ATP = (6R)-5,10-methenyltetrahydrofolate + ADP + phosphate. It participates in one-carbon metabolism; tetrahydrofolate interconversion. Involved in the removal of 5-formyltetrahydrofolate. In vitro, it is a potent inhibitor of various folate-dependent enzymes in the C1 metabolism network and in vivo it might function as a folate storage. 5-formyltetrahydrofolate is also used as an antifolate rescue agent in cancer chemotherapy. Catalyzes the irreversible ATP-dependent transformation of 5-formyltetrahydrofolate (5-CHO-THF) to form 5,10-methenyltetrahydrofolate (5,10-CH=THF). The reverse reaction is catalyzed by the serine hydroxymethyltransferase GlyA (SHMT). This Escherichia coli O157:H7 protein is 5-formyltetrahydrofolate cyclo-ligase (ygfA).